Here is a 231-residue protein sequence, read N- to C-terminus: Large ribosomal subunit protein uL1 (231 aa).

It belongs to the universal ribosomal protein uL1 family. In terms of assembly, part of the 50S ribosomal subunit.

Functionally, binds directly to 23S rRNA. The L1 stalk is quite mobile in the ribosome, and is involved in E site tRNA release. Protein L1 is also a translational repressor protein, it controls the translation of the L11 operon by binding to its mRNA. This chain is Large ribosomal subunit protein uL1, found in Pseudomonas syringae pv. syringae (strain B728a).